The chain runs to 220 residues: Ribose-5-phosphate isomerase A (220 aa).

Residues 28-31 (TGST), 81-84 (DGAD), and 94-97 (KGGG) contribute to the substrate site. E103 acts as the Proton acceptor in catalysis. K121 lines the substrate pocket.

The protein belongs to the ribose 5-phosphate isomerase family. Homodimer.

It catalyses the reaction aldehydo-D-ribose 5-phosphate = D-ribulose 5-phosphate. Its pathway is carbohydrate degradation; pentose phosphate pathway; D-ribose 5-phosphate from D-ribulose 5-phosphate (non-oxidative stage): step 1/1. Catalyzes the reversible conversion of ribose-5-phosphate to ribulose 5-phosphate. This Leptothrix cholodnii (strain ATCC 51168 / LMG 8142 / SP-6) (Leptothrix discophora (strain SP-6)) protein is Ribose-5-phosphate isomerase A.